A 261-amino-acid polypeptide reads, in one-letter code: Cytochrome c oxidase subunit 3 (261 aa).

Residues 1 to 15 (MAHQAHAYHMVDPSP) lie on the Mitochondrial matrix side of the membrane. The helical transmembrane segment at 16 to 34 (WPLTGAVAALLLTSGLAIW) threads the bilayer. Over 35 to 40 (FPFNSL) the chain is Mitochondrial intermembrane. Residues 41–66 (ILLTLGLVLLLLTMYQWWRDIVREGT) traverse the membrane as a helical segment. Residues 67-72 (FQGHHT) lie on the Mitochondrial matrix side of the membrane. The chain crosses the membrane as a helical span at residues 73–105 (PPVQKGLRYGMILFITSEVFFFLGFFWAFYHSS). The Mitochondrial intermembrane portion of the chain corresponds to 106–128 (LAPTPELGGCWPPTGIVPLNPFE). A helical transmembrane segment spans residues 129-152 (VPLLNTAVLLASGVTVTWAHHSIM). Residues 153–155 (EGE) are Mitochondrial matrix-facing. Residues 156-183 (RKQAIHSLTLTILLGFYFTFLQAMEYYE) form a helical membrane-spanning segment. The Mitochondrial intermembrane portion of the chain corresponds to 184 to 190 (APFTIAD). The helical transmembrane segment at 191–223 (GVYGSTFFVATGFHGLHVIIGSTFLAICLLRQI) threads the bilayer. Residues 224 to 232 (RYHFTSEHH) lie on the Mitochondrial matrix side of the membrane. Residues 233–256 (FGFEAAAWYWHFVDVVWLFLYISI) traverse the membrane as a helical segment. The Mitochondrial intermembrane portion of the chain corresponds to 257 to 261 (YWWGS).

Belongs to the cytochrome c oxidase subunit 3 family. In terms of assembly, component of the cytochrome c oxidase (complex IV, CIV), a multisubunit enzyme composed of 14 subunits. The complex is composed of a catalytic core of 3 subunits MT-CO1, MT-CO2 and MT-CO3, encoded in the mitochondrial DNA, and 11 supernumerary subunits COX4I, COX5A, COX5B, COX6A, COX6B, COX6C, COX7A, COX7B, COX7C, COX8 and NDUFA4, which are encoded in the nuclear genome. The complex exists as a monomer or a dimer and forms supercomplexes (SCs) in the inner mitochondrial membrane with NADH-ubiquinone oxidoreductase (complex I, CI) and ubiquinol-cytochrome c oxidoreductase (cytochrome b-c1 complex, complex III, CIII), resulting in different assemblies (supercomplex SCI(1)III(2)IV(1) and megacomplex MCI(2)III(2)IV(2)).

It is found in the mitochondrion inner membrane. It carries out the reaction 4 Fe(II)-[cytochrome c] + O2 + 8 H(+)(in) = 4 Fe(III)-[cytochrome c] + 2 H2O + 4 H(+)(out). Functionally, component of the cytochrome c oxidase, the last enzyme in the mitochondrial electron transport chain which drives oxidative phosphorylation. The respiratory chain contains 3 multisubunit complexes succinate dehydrogenase (complex II, CII), ubiquinol-cytochrome c oxidoreductase (cytochrome b-c1 complex, complex III, CIII) and cytochrome c oxidase (complex IV, CIV), that cooperate to transfer electrons derived from NADH and succinate to molecular oxygen, creating an electrochemical gradient over the inner membrane that drives transmembrane transport and the ATP synthase. Cytochrome c oxidase is the component of the respiratory chain that catalyzes the reduction of oxygen to water. Electrons originating from reduced cytochrome c in the intermembrane space (IMS) are transferred via the dinuclear copper A center (CU(A)) of subunit 2 and heme A of subunit 1 to the active site in subunit 1, a binuclear center (BNC) formed by heme A3 and copper B (CU(B)). The BNC reduces molecular oxygen to 2 water molecules using 4 electrons from cytochrome c in the IMS and 4 protons from the mitochondrial matrix. This is Cytochrome c oxidase subunit 3 (mt-co3) from Tetraodon nigroviridis (Spotted green pufferfish).